A 158-amino-acid chain; its full sequence is UPF0262 protein Rsph17029_2283 (158 aa).

Belongs to the UPF0262 family.

This chain is UPF0262 protein Rsph17029_2283, found in Cereibacter sphaeroides (strain ATCC 17029 / ATH 2.4.9) (Rhodobacter sphaeroides).